Consider the following 676-residue polypeptide: MINDKLPKIWHGGDYNPEQWDSQEIWDEDVRMFKLAGIDVATLNVFSWALNQPNEDTYNFEWLDDKINRLYENGIYTCLATSTAAHPAWMAKKYPDVLRVDFYGRKRKFGSRHNSCPNSPTYREYSEKIADKLAERYKDHPAVLIWHVSNEYGGYCYCDNCQDAFRVWLSDKYGTLEKLNKAWNTGFWGHTFYEWDEIVAPNMLSEEREDNVSDFQGISLDYRRFQSDSLLDCYKLEYNAIRKHTPNIPITTNLMGTYPMLDYFKWAKEMDVVSWDNYPAIDTPFSYTAMTHDLMRGLKSGQPFMLMEQTPSQQNWQPYNSLKRPGVMRLWSYQAIGRGADTILYFQLRRSVGACEKYHGAVIEHVGHEHTRVFNEVAQIGKEFNQLGDTLLDARVNARVAIVFDWENRWATELSSGPSVSLDYVNEVHKYYDALYKLNVQVDMVGVEEDLSQYDVVIAPVLYMVKEGYAAKVESFVENGGTFITTFFSGIVNETDIVTLGGYPGELRKVLGIWAEEIDALHPDETNEIVVNGSRGSLSGSYSCNLLFDLIHTEGAQAVAEYGSDFYQGMPVLTVNEFGKGKAWYVASSPDAEFLVDFLQTVCEEAGVEPLLSVPEGVETTERVKDGQTYLFVLNHNNKVESIDLKDSQYQELLSTQQLSGTVELEAKGVFILAKV.

Residue Arg-112 participates in substrate binding. Zn(2+) is bound at residue Cys-116. Asn-150 contacts substrate. Glu-151 functions as the Proton donor in the catalytic mechanism. Residues Cys-156, Cys-158, and Cys-161 each contribute to the Zn(2+) site. Glu-308 functions as the Nucleophile in the catalytic mechanism. Residues Trp-316 and 356-359 each bind substrate; that span reads EKYH.

Belongs to the glycosyl hydrolase 42 family. In terms of assembly, homodimer.

The catalysed reaction is Hydrolysis of terminal non-reducing beta-D-galactose residues in beta-D-galactosides.. Its activity is regulated as follows. No activity lost during treatment with 100 mM EDTA after 2 hours, and the addition of 1 mM MgCl(2), 1 mM CaCl(2) or 1 mM MnCl(2) has no effect. However, the enzyme activity is inhibited by Zn(2+), Cu(2+), Ni(2+) and Co(2+) to different extents. Addition of Na(+) or K(+) slightly stimulates the enzyme activity at low concentrations and the optimal concentration is 250 mM. A further increase of their concentration of ions above the optimum value results in a decrease in enzyme activity. The enzyme is still active even in the presence of Na(+) or K(+) at a concentration up to 5 M. Functionally, hydrolyzes lactose, o-nitrophenyl-beta-D-galactopyranoside (ONPG), p-nitrophenyl-beta-D-galactopyranoside (PNPG), 5-bromo-4-chloro-3-indolyl-beta-D-galactopyranoside (X-gal), o-nitrophenyl-beta-D-fucopyranoside, p-nitrophenyl-beta-D-mannoside, o-nitrophenyl-beta-D-glucoside, p-nitrophenyl-beta-D-xyloside, p-nitrophenyl-beta-D-cellobioside, p-nitrophenyl-beta-D-arabinoside, p-nitrophenyl-beta-D-lactoside, p-nitrophenyl-beta-D-galacturonide, p-nitrophenyl-beta-D-glucuronide and p-nitrophenyl-alpha-D-galactoside with highest level of activity with ONPG as substrate, intermediate level of activity with PNPG and lower levels of activity with all other chromogenic nitrophenyl analogs. Able to hydrolyze 34% of milk lactose after 60 minutes at 5 degrees Celsius. This Planococcus sp. (strain L4) protein is Beta-galactosidase BgaP.